Here is a 265-residue protein sequence, read N- to C-terminus: Vegetative storage protein 2 (265 aa).

The signal sequence occupies residues 1–18 (MKILSLSLLLLLAATVSA). N-linked (GlcNAc...) asparagine glycans are attached at residues Asn110, Asn188, and Asn210.

This sequence belongs to the APS1/VSP family. Highly expressed in flowers, but also found in leaves, vegetative shoots, petioles, peduncles, and receptacles of floral organs.

Functionally, may function as somatic storage protein during early seedling development. This chain is Vegetative storage protein 2 (VSP2), found in Arabidopsis thaliana (Mouse-ear cress).